The primary structure comprises 979 residues: MNAPHPASSALAAERPTLADLEARDAFAHRHIGPSADEQTAMLGTLGYTSRAALIDAVIPPAIRRQDGMPLGEFTQPLTEEAALAKLRGIAGQNRVVKSLIGQGYYGTHTPGVILRNILENPAWYTAYTPYQPEISQGRLEAMLNFQQMVIDLTAMDIANASMLDEATAAAEAMTLLQRIGKSKSTVFFVADDVLPQTLEVVRTRAEPIGVQVVTGPAADAAKHDAFGVLLQYPGANGALLGDLATYQALTDAVHAAGGLVVAAADLLALTLLAAPGEWGADVVIGNTQRFGVPFGFGGPHAGYMAVRDAFKRSMPGRLVGVTIDAQGNPAYRLALQTREQHIRREKATSNICTAQVLLGVMASMYAVYHGPQGLKRIAQRVHRLSATLAAGLRAIGYTLESDAFFDTLTVVTGPRTANLHIAAQAHGINLRQIDDARLGISLDETVTRADVVALWEVFAHAAHAAAPDFDQTEAGVADAYPASLVRQSAYLTHPVFNAHHSEHEMLRYLRSLADKDLALDRTMIPLGSCTMKLNATAEMLPVTWPEFSNIHPFAPADQTVGYREMIDQLEQMLCAATGYAAVSLQPNAGSQGEYAGLLIIHAYHASRGEAHRNVCLIPSSAHGTNPASAQMAGMQVVVVACDERGNVDLADLEKKAAEHSKNLAAIMITYPSTHGVFEEGVKRVCEIVHSHGGQVYVDGANMNAMVGTAAPGHFGGDVSHLNLHKTFCIPHGGGGPGVGPVAVGAHLAPFLPGRAASGEDASQNIGNVSASAFGSASILPISWMYIAMMGAAGLTAATETAILSANYVAKRLAPYYPVLYTGAHGLVAHECILDIRPLQKESGISNEDIAKRLMDFGFHAPTMSFPVPGTLMIEPTESEPKVELDRFIDAMIAIRGEVDKVISGEFDREDNPLKHAPHTAAVVMADDWSHKYTREQAAYPVASLRARKYWPPVGRADNVYGDRNLFCACVPMSEYAQD.

Lysine 726 is subject to N6-(pyridoxal phosphate)lysine.

The protein belongs to the GcvP family. As to quaternary structure, the glycine cleavage system is composed of four proteins: P, T, L and H. Pyridoxal 5'-phosphate is required as a cofactor.

The enzyme catalyses N(6)-[(R)-lipoyl]-L-lysyl-[glycine-cleavage complex H protein] + glycine + H(+) = N(6)-[(R)-S(8)-aminomethyldihydrolipoyl]-L-lysyl-[glycine-cleavage complex H protein] + CO2. Functionally, the glycine cleavage system catalyzes the degradation of glycine. The P protein binds the alpha-amino group of glycine through its pyridoxal phosphate cofactor; CO(2) is released and the remaining methylamine moiety is then transferred to the lipoamide cofactor of the H protein. This chain is Glycine dehydrogenase (decarboxylating), found in Ralstonia pickettii (strain 12J).